The primary structure comprises 328 residues: Protein-glutamine deamidase Cif (328 aa).

Residues 1–68 (MLEHGVMKIP…TNRTGENPMI (68 aa)) are disordered. The segment covering 52 to 63 (RSSSISNTNRTG) has biased composition (polar residues). Catalysis depends on residues Cys156, His211, and Gln231.

The protein belongs to the Cif family.

It localises to the secreted. Its subcellular location is the host nucleus. It catalyses the reaction L-glutaminyl-[protein] + H2O = L-glutamyl-[protein] + NH4(+). Its function is as follows. Protein-glutamine deamidase effector that inhibits the host cell cycle and other key cellular processes such as the actin network and programmed-cell death. Acts by mediating the side chain deamidation of 'Gln-40' of host NEDD8, converting it to glutamate, thereby abolishing the activity of cullin-RING-based E3 ubiquitin-protein ligase complexes (CRL complexes). Inactivation of CRL complexes prevents ubiquitination and subsequent degradation of the cyclin-dependent kinase inhibitors CDKN1A/p21 and CDKN1B/p27, leading to G1 and G2 cell cycle arrests in host cells. Deamidation of 'Gln-40' of host NEDD8 also triggers macrophage-specific programmed cell death. Also able to catalyze deamidation of 'Gln-40' of host ubiquitin in vitro; however, NEDD8 constitutes the preferred substrate in vivo. Also regulates the host NF-kappa-B signaling via activation of MAPK/ERK cascade: activation of host MAPK/ERK cascade is independent of CRL complexes inhibition, suggesting that Cif has other host protein targets than NEDD8. In Burkholderia pseudomallei (strain K96243), this protein is Protein-glutamine deamidase Cif.